Here is a 78-residue protein sequence, read N- to C-terminus: Sec-independent protein translocase protein TatA (78 aa).

Residues 1–21 traverse the membrane as a helical segment; the sequence is MGSLSIWHWLIVLLIVALVFG. Composition is skewed to basic and acidic residues over residues 39–57 and 65–78; these read FKEG…RDQL and VDAK…GDSR. Positions 39–78 are disordered; that stretch reads FKEGMKDGETPEGQQRDQLSRTNTVDVDAKEKAPHSGDSR.

Belongs to the TatA/E family. The Tat system comprises two distinct complexes: a TatABC complex, containing multiple copies of TatA, TatB and TatC subunits, and a separate TatA complex, containing only TatA subunits. Substrates initially bind to the TatABC complex, which probably triggers association of the separate TatA complex to form the active translocon.

It localises to the cell inner membrane. Functionally, part of the twin-arginine translocation (Tat) system that transports large folded proteins containing a characteristic twin-arginine motif in their signal peptide across membranes. TatA could form the protein-conducting channel of the Tat system. The protein is Sec-independent protein translocase protein TatA of Paraburkholderia phymatum (strain DSM 17167 / CIP 108236 / LMG 21445 / STM815) (Burkholderia phymatum).